The primary structure comprises 254 residues: rRNA N-glycosylase sapovaccarin-S1 (254 aa).

It belongs to the ribosome-inactivating protein family. Type 1 RIP subfamily. As to expression, expressed in seeds; most abundant in the perisperm.

It carries out the reaction Endohydrolysis of the N-glycosidic bond at one specific adenosine on the 28S rRNA.. Functionally, exhibits N-glycosylase activity. Catalyzes the release of one adenine from a ribosome. Acts as a ribosome-inactivating protein and inhibits protein synthesis in a rabbit-reticulocyte lysate system and in various cell lines (in vitro). Induces cell death in Huh-7 liver cells. May contribute to the protection against plant pests and predators or play a role in regulating the death of plant cells. The sequence is that of rRNA N-glycosylase sapovaccarin-S1 from Gypsophila vaccaria (Cow soapwort).